The following is a 541-amino-acid chain: GMP synthase [glutamine-hydrolyzing] (541 aa).

The 196-residue stretch at 17-212 folds into the Glutamine amidotransferase type-1 domain; sequence TILVLDFGSQ…AVDICQSTTD (196 aa). The active-site Nucleophile is the Cys93. Active-site residues include His186 and Glu188. The GMPS ATP-PPase domain maps to 213–416; sequence WTMGKFVDQE…LGIPEDLVWR (204 aa). 241–247 contacts ATP; sequence SGGVDST. Residues Arg315, Asp478, Lys533, and Glu539 each contribute to the XMP site.

In terms of assembly, homodimer. Mg(2+) is required as a cofactor.

It localises to the cytoplasm. The protein localises to the cytosol. The catalysed reaction is XMP + L-glutamine + ATP + H2O = GMP + L-glutamate + AMP + diphosphate + 2 H(+). Its pathway is purine metabolism; GMP biosynthesis; GMP from XMP (L-Gln route): step 1/1. In terms of biological role, catalyzes the conversion of xanthine monophosphate (XMP) to GMP in the presence of glutamine and ATP through an adenyl-XMP intermediate. In Phaeosphaeria nodorum (strain SN15 / ATCC MYA-4574 / FGSC 10173) (Glume blotch fungus), this protein is GMP synthase [glutamine-hydrolyzing] (GUA1).